The following is a 216-amino-acid chain: Phosphatidylserine decarboxylase proenzyme (216 aa).

Residue Ser182 is the Schiff-base intermediate with substrate; via pyruvic acid of the active site. Residue Ser182 is modified to Pyruvic acid (Ser); by autocatalysis.

It belongs to the phosphatidylserine decarboxylase family. PSD-A subfamily. Heterodimer of a large membrane-associated beta subunit and a small pyruvoyl-containing alpha subunit. Pyruvate serves as cofactor. In terms of processing, is synthesized initially as an inactive proenzyme. Formation of the active enzyme involves a self-maturation process in which the active site pyruvoyl group is generated from an internal serine residue via an autocatalytic post-translational modification. Two non-identical subunits are generated from the proenzyme in this reaction, and the pyruvate is formed at the N-terminus of the alpha chain, which is derived from the carboxyl end of the proenzyme. The post-translation cleavage follows an unusual pathway, termed non-hydrolytic serinolysis, in which the side chain hydroxyl group of the serine supplies its oxygen atom to form the C-terminus of the beta chain, while the remainder of the serine residue undergoes an oxidative deamination to produce ammonia and the pyruvoyl prosthetic group on the alpha chain.

Its subcellular location is the cell membrane. It catalyses the reaction a 1,2-diacyl-sn-glycero-3-phospho-L-serine + H(+) = a 1,2-diacyl-sn-glycero-3-phosphoethanolamine + CO2. Its pathway is phospholipid metabolism; phosphatidylethanolamine biosynthesis; phosphatidylethanolamine from CDP-diacylglycerol: step 2/2. In terms of biological role, catalyzes the formation of phosphatidylethanolamine (PtdEtn) from phosphatidylserine (PtdSer). The protein is Phosphatidylserine decarboxylase proenzyme of Burkholderia mallei (strain NCTC 10247).